A 1027-amino-acid polypeptide reads, in one-letter code: Scavenger receptor cysteine-rich domain-containing protein SCART1 (1027 aa).

The first 19 residues, 1-19 (MRAALWTLGLGPLLLNLWA), serve as a signal peptide directing secretion. Over 20-906 (VPIGGPGALR…APFRTFWVVS (887 aa)) the chain is Extracellular. The SRCR 1 domain occupies 28–128 (LRLAYRHSTC…HAWVVVALCS (101 aa)). Intrachain disulfides connect Cys-53–Cys-117, Cys-66–Cys-127, and Cys-97–Cys-107. Asn-94 is a glycosylation site (N-linked (GlcNAc...) asparagine). An N-linked (GlcNAc...) asparagine glycan is attached at Asn-129. SRCR domains follow at residues 135 to 227 (LRLV…VVCS), 232 to 326 (ARLV…LRCS), 328 to 428 (FRMV…AVCS), 434 to 534 (LRLR…VVCS), 555 to 656 (LSLH…VFCS), 661 to 761 (LRLR…AGLS), and 786 to 886 (LRVR…VRCW). Intrachain disulfides connect Cys-160–Cys-216, Cys-171–Cys-226, Cys-196–Cys-206, Cys-253–Cys-315, Cys-266–Cys-325, and Cys-297–Cys-307. An N-linked (GlcNAc...) asparagine glycan is attached at Asn-332. Intrachain disulfides connect Cys-353–Cys-417, Cys-366–Cys-427, Cys-397–Cys-407, Cys-472–Cys-533, Cys-503–Cys-513, Cys-594–Cys-655, and Cys-625–Cys-635. Intrachain disulfides connect Cys-824–Cys-885 and Cys-855–Cys-865. The chain crosses the membrane as a helical span at residues 907-927 (VVLGSLLGLLLLGLMAFLILP). The Cytoplasmic portion of the chain corresponds to 928–1027 (RVTQAMQRGL…AAFPLEEMTL (100 aa)).

In terms of tissue distribution, mainly expressed by CD4(+) and CD8(+) T lymphocytes. Also highly expressed in small intestine and colon. Expressed (at protein level) in small intestine, stomach, gall bladder, and placental villi.

It is found in the membrane. Its function is as follows. May play a role in the immune system, perhaps as a co-receptor on alphabeta and gammadelta T-cells. In Homo sapiens (Human), this protein is Scavenger receptor cysteine-rich domain-containing protein SCART1.